A 104-amino-acid chain; its full sequence is Protein P3 (104 aa).

Residues 77 to 99 (LVFGVPQKTLLLGFGGLLVLGLV) traverse the membrane as a helical segment.

In terms of assembly, homodimer.

The protein localises to the virion membrane. The sequence is that of Protein P3 (III) from Pseudoalteromonas phage PM2 (Bacteriophage PM2).